Reading from the N-terminus, the 350-residue chain is Nicotinate-nucleotide--dimethylbenzimidazole phosphoribosyltransferase (350 aa).

Residue E316 is the Proton acceptor of the active site.

This sequence belongs to the CobT family.

The catalysed reaction is 5,6-dimethylbenzimidazole + nicotinate beta-D-ribonucleotide = alpha-ribazole 5'-phosphate + nicotinate + H(+). The protein operates within nucleoside biosynthesis; alpha-ribazole biosynthesis; alpha-ribazole from 5,6-dimethylbenzimidazole: step 1/2. In terms of biological role, catalyzes the synthesis of alpha-ribazole-5'-phosphate from nicotinate mononucleotide (NAMN) and 5,6-dimethylbenzimidazole (DMB). This Pseudomonas savastanoi pv. phaseolicola (strain 1448A / Race 6) (Pseudomonas syringae pv. phaseolicola (strain 1448A / Race 6)) protein is Nicotinate-nucleotide--dimethylbenzimidazole phosphoribosyltransferase.